The primary structure comprises 297 residues: RNA polymerase sigma-F factor (297 aa).

Residues 1–46 form a disordered region; that stretch reads MTVPASTAPQVPPQQDPQVPHPQEPREEPHEEPPSPPAAPRPQSRG. Over residues 10–22 the composition is skewed to pro residues; that stretch reads QVPPQQDPQVPHP. The span at 23 to 33 shows a compositional bias: basic and acidic residues; sequence QEPREEPHEEP. Positions 101–114 match the Polymerase core binding motif; that stretch reads DVVQVGTIGLINAI. The segment at residues 264 to 283 is a DNA-binding region (H-T-H motif); the sequence is QSQISAELGVSQMHVSRLLA.

It belongs to the sigma-70 factor family. SigB subfamily.

In terms of biological role, sigma factors are initiation factors that promote the attachment of RNA polymerase to specific initiation sites and are then released. This sigma factor is required for normal spore maturation. The protein is RNA polymerase sigma-F factor (sigF) of Kitasatospora aureofaciens (Streptomyces aureofaciens).